Here is a 91-residue protein sequence, read N- to C-terminus: UPF0298 protein M28_Spy0318 (91 aa).

It belongs to the UPF0298 family.

It is found in the cytoplasm. This is UPF0298 protein M28_Spy0318 from Streptococcus pyogenes serotype M28 (strain MGAS6180).